The primary structure comprises 270 residues: Phosphatidate cytidylyltransferase (270 aa).

A run of 7 helical transmembrane segments spans residues 19–39 (LWLT…IGLA), 53–73 (TAFS…LLIL), 76–96 (GALL…VTQW), 101–121 (GWPA…SLLR), 126–146 (FGFT…IAAY), 183–203 (LVAS…ALLL), and 248–268 (ALLY…AIFF).

It belongs to the CDS family.

Its subcellular location is the cell inner membrane. The catalysed reaction is a 1,2-diacyl-sn-glycero-3-phosphate + CTP + H(+) = a CDP-1,2-diacyl-sn-glycerol + diphosphate. It participates in phospholipid metabolism; CDP-diacylglycerol biosynthesis; CDP-diacylglycerol from sn-glycerol 3-phosphate: step 3/3. This Brucella suis biovar 1 (strain 1330) protein is Phosphatidate cytidylyltransferase (cdsA).